Reading from the N-terminus, the 419-residue chain is D-amino acid dehydrogenase (419 aa).

Residue 3–17 coordinates FAD; that stretch reads VLILGSGVVGVTSAY.

Belongs to the DadA oxidoreductase family. FAD is required as a cofactor.

The enzyme catalyses a D-alpha-amino acid + A + H2O = a 2-oxocarboxylate + AH2 + NH4(+). It functions in the pathway amino-acid degradation; D-alanine degradation; NH(3) and pyruvate from D-alanine: step 1/1. In terms of biological role, oxidative deamination of D-amino acids. This is D-amino acid dehydrogenase from Chromohalobacter salexigens (strain ATCC BAA-138 / DSM 3043 / CIP 106854 / NCIMB 13768 / 1H11).